A 651-amino-acid chain; its full sequence is DNA mismatch repair protein MutL (651 aa).

Residues 383-405 (TAAEEPTPAPTSPDLEIGDLDDQ) form a disordered region.

This sequence belongs to the DNA mismatch repair MutL/HexB family.

Its function is as follows. This protein is involved in the repair of mismatches in DNA. It is required for dam-dependent methyl-directed DNA mismatch repair. May act as a 'molecular matchmaker', a protein that promotes the formation of a stable complex between two or more DNA-binding proteins in an ATP-dependent manner without itself being part of a final effector complex. The polypeptide is DNA mismatch repair protein MutL (Lacticaseibacillus paracasei (strain ATCC 334 / BCRC 17002 / CCUG 31169 / CIP 107868 / KCTC 3260 / NRRL B-441) (Lactobacillus paracasei)).